A 623-amino-acid polypeptide reads, in one-letter code: Zinc finger protein 131 (623 aa).

The BTB domain maps to 34-98 (TDITLIVDGH…TYTAKLMIQG (65 aa)). The Nuclear localization signal 1 signature appears at 137–148 (TGKNEAKKRKIA). 3 C2H2-type zinc fingers span residues 261 to 283 (FHCE…MKSH), 288 to 311 (FKCE…NCYH), and 328 to 350 (HVCQ…LRKH). Glycyl lysine isopeptide (Lys-Gly) (interchain with G-Cter in SUMO2) cross-links involve residues Lys289 and Lys295. The Nuclear localization signal 2 motif lies at 317-328 (VSKKQRTGKKIH). The C2H2-type 4; degenerate zinc-finger motif lies at 356-381 (FECPNCHERFARNSTLKCHLTACQTG). 2 consecutive C2H2-type zinc fingers follow at residues 392–414 (YECQ…LVIH) and 420–443 (NHCT…SDAH). The span at 573 to 617 (NQEERESSQADAAEAAREDHEDAEDLETKPTVDSEAEKAENEDRT) shows a compositional bias: basic and acidic residues. The segment at 573–623 (NQEERESSQADAAEAAREDHEDAEDLETKPTVDSEAEKAENEDRTALPVLE) is disordered. Lys601 is covalently cross-linked (Glycyl lysine isopeptide (Lys-Gly) (interchain with G-Cter in SUMO)).

It belongs to the krueppel C2H2-type zinc-finger protein family. Post-translationally, monosumoylated at Lys-601 by CBX4 and UHRF2. Sumoylation may potentiate ZNF131 inhibition of estrogen signaling. Sumoylation does not interfere with ubiquitination. Ubiquitinated. In terms of tissue distribution, predominant expression is found in different brain areas such as the occipital and temporal lobe, the nucleus caudatus, hippocampus, and the cerebellum as well as in testis and thymus.

Its subcellular location is the nucleus. In terms of biological role, plays a role during development and organogenesis as well as in the function of the adult central nervous system. May be involved in transcriptional regulation as a repressor of ESR1/ER-alpha signaling. This Homo sapiens (Human) protein is Zinc finger protein 131 (ZNF131).